A 203-amino-acid polypeptide reads, in one-letter code: bMERB domain-containing protein 1 (203 aa).

In terms of domain architecture, bMERB spans 3 to 149 (LKQSLSVHLE…EQEEDKEMAD (147 aa)). The segment at 160–186 (KVTKSSASSRAEKKAEPPPSKPTVAKT) is disordered.

The polypeptide is bMERB domain-containing protein 1 (Bmerb1) (Rattus norvegicus (Rat)).